A 597-amino-acid chain; its full sequence is Kelch-like protein 21 (597 aa).

The 69-residue stretch at 35–103 (LDVTLEAAGG…SYTGRVAVSG (69 aa)) folds into the BTB domain. One can recognise a BACK domain in the interval 138–239 (CLDMQDFAEA…RRFYLLAHVE (102 aa)). Kelch repeat units follow at residues 287–335 (ILVL…ALGN), 336–382 (DIYV…VLNG), 384–422 (LYVV…ACRG), 423–470 (RLYA…TLNG), 472–512 (MYFV…ALGG), and 513–560 (KLYV…SIFR). The segment at 570 to 597 (GRGFELNSGSSDVDAGHHRLPQNPEELQ) is disordered.

In terms of assembly, component of the BCR(KLHL21) E3 ubiquitin ligase complex, at least composed of CUL3, KLHL21 and RBX1.

Its subcellular location is the cytoplasm. It localises to the cytoskeleton. It is found in the spindle. It functions in the pathway protein modification; protein ubiquitination. Substrate-specific adapter of BCR (BTB-CUL3-RBX1) E3 ubiquitin-protein ligase complex required for efficient chromosome alignment and cytokinesis. The BCR(KLHL21) E3 ubiquitin ligase complex regulates localization of the chromosomal passenger complex (CPC) from chromosomes to the spindle midzone in anaphase and mediates the ubiquitination of AURKB. Ubiquitination of AURKB by BCR(KLHL21) E3 ubiquitin ligase complex may not lead to its degradation by the proteasome. This chain is Kelch-like protein 21 (Klhl21), found in Rattus norvegicus (Rat).